We begin with the raw amino-acid sequence, 172 residues long: Lipoprotein signal peptidase (172 aa).

The next 2 membrane-spanning stretches (helical) occupy residues 70 to 90 and 94 to 114; these read ERWLLVAGTALIAAGIVAWIW and AKGDVVALGLVLGGAIGNIAD. Catalysis depends on residues Asp-123 and Asp-142. The helical transmembrane segment at 134-154 threads the bilayer; sequence PFLVFNVADAAITIGVLILVL.

It belongs to the peptidase A8 family.

It localises to the cell inner membrane. It catalyses the reaction Release of signal peptides from bacterial membrane prolipoproteins. Hydrolyzes -Xaa-Yaa-Zaa-|-(S,diacylglyceryl)Cys-, in which Xaa is hydrophobic (preferably Leu), and Yaa (Ala or Ser) and Zaa (Gly or Ala) have small, neutral side chains.. It participates in protein modification; lipoprotein biosynthesis (signal peptide cleavage). In terms of biological role, this protein specifically catalyzes the removal of signal peptides from prolipoproteins. The chain is Lipoprotein signal peptidase from Rhizorhabdus wittichii (strain DSM 6014 / CCUG 31198 / JCM 15750 / NBRC 105917 / EY 4224 / RW1) (Sphingomonas wittichii).